Consider the following 1181-residue polypeptide: HEAT repeat-containing protein 6 (1181 aa).

One copy of the HEAT 1 repeat lies at 159-198 (PELLGNTGLLMKLSDLAQSDPEVRRAAVHCMANLCLSVPG). Disordered regions lie at residues 292–347 (QYDG…PVTG) and 371–390 (LDGS…SSSS). The span at 300–312 (KPQQSESSASRPT) shows a compositional bias: polar residues. A compositionally biased stretch (basic residues) spans 313–325 (LNKKKKSKVKPKK). Phosphoserine is present on residues serine 336 and serine 337. Phosphoserine occurs at positions 399 and 402. HEAT repeat units follow at residues 452 to 490 (ELGS…GSKQ), 515 to 552 (SIRE…NAPY), and 558 to 595 (SLLT…THAP). Residues 613–646 (NSNSATPHLSPPDWWKKAPAGPSLEETSVSSPKG) form a disordered region. A Phosphothreonine modification is found at threonine 618. Over residues 637–646 (EETSVSSPKG) the composition is skewed to polar residues. Serine 643 carries the phosphoserine modification.

Amplified in breast cancer cell lines MCF-7 and BT-474.

Its function is as follows. Amplification-dependent oncogene. This is HEAT repeat-containing protein 6 (HEATR6) from Homo sapiens (Human).